Here is an 897-residue protein sequence, read N- to C-terminus: Valine--tRNA ligase (897 aa).

A 'HIGH' region motif is present at residues 46-56 (PNVTGSLHMGH). A 'KMSKS' region motif is present at residues 532 to 536 (KMSKT). Lysine 535 is a binding site for ATP. Residues 839-897 (LRRSLEKLDKESGVLAARLDNASYLANAPAELVTESRAKLAEQRAQAAILAEQLARLEN) are a coiled coil.

The protein belongs to the class-I aminoacyl-tRNA synthetase family. ValS type 1 subfamily. As to quaternary structure, monomer.

The protein resides in the cytoplasm. It carries out the reaction tRNA(Val) + L-valine + ATP = L-valyl-tRNA(Val) + AMP + diphosphate. In terms of biological role, catalyzes the attachment of valine to tRNA(Val). As ValRS can inadvertently accommodate and process structurally similar amino acids such as threonine, to avoid such errors, it has a 'posttransfer' editing activity that hydrolyzes mischarged Thr-tRNA(Val) in a tRNA-dependent manner. This Gloeobacter violaceus (strain ATCC 29082 / PCC 7421) protein is Valine--tRNA ligase.